We begin with the raw amino-acid sequence, 121 residues long: Small ribosomal subunit protein uS13 (121 aa).

A disordered region spans residues 99–121 (RGQRTRTNSRTRKGPRRKIMKKK). Residues 101–121 (QRTRTNSRTRKGPRRKIMKKK) are compositionally biased toward basic residues.

This sequence belongs to the universal ribosomal protein uS13 family. Part of the 30S ribosomal subunit. Forms a loose heterodimer with protein S19. Forms two bridges to the 50S subunit in the 70S ribosome.

Its function is as follows. Located at the top of the head of the 30S subunit, it contacts several helices of the 16S rRNA. In the 70S ribosome it contacts the 23S rRNA (bridge B1a) and protein L5 of the 50S subunit (bridge B1b), connecting the 2 subunits; these bridges are implicated in subunit movement. Contacts the tRNAs in the A and P-sites. This chain is Small ribosomal subunit protein uS13, found in Thermodesulfovibrio yellowstonii (strain ATCC 51303 / DSM 11347 / YP87).